Reading from the N-terminus, the 153-residue chain is Small ribosomal subunit protein uS13 (153 aa).

The segment at 132–153 (VRGQRTRSHHRKGRTVGVIKKK) is disordered. Positions 135–153 (QRTRSHHRKGRTVGVIKKK) are enriched in basic residues.

This sequence belongs to the universal ribosomal protein uS13 family. In terms of assembly, part of the 30S ribosomal subunit. Forms a loose heterodimer with protein S19. Forms two bridges to the 50S subunit in the 70S ribosome.

Located at the top of the head of the 30S subunit, it contacts several helices of the 16S rRNA. In the 70S ribosome it contacts the 23S rRNA (bridge B1a) and protein L5 of the 50S subunit (bridge B1b), connecting the 2 subunits; these bridges are implicated in subunit movement. In Nanoarchaeum equitans (strain Kin4-M), this protein is Small ribosomal subunit protein uS13.